Reading from the N-terminus, the 200-residue chain is NADH-quinone oxidoreductase subunit C (200 aa).

This sequence belongs to the complex I 30 kDa subunit family. NDH-1 is composed of 14 different subunits. Subunits NuoB, C, D, E, F, and G constitute the peripheral sector of the complex.

It localises to the cell inner membrane. It carries out the reaction a quinone + NADH + 5 H(+)(in) = a quinol + NAD(+) + 4 H(+)(out). NDH-1 shuttles electrons from NADH, via FMN and iron-sulfur (Fe-S) centers, to quinones in the respiratory chain. The immediate electron acceptor for the enzyme in this species is believed to be ubiquinone. Couples the redox reaction to proton translocation (for every two electrons transferred, four hydrogen ions are translocated across the cytoplasmic membrane), and thus conserves the redox energy in a proton gradient. In Burkholderia vietnamiensis (strain G4 / LMG 22486) (Burkholderia cepacia (strain R1808)), this protein is NADH-quinone oxidoreductase subunit C.